Reading from the N-terminus, the 296-residue chain is NADH-cytochrome b5 reductase 2-A (296 aa).

The helical transmembrane segment at 15-35 (FVIGAPTIALCSYYYSSGAFL) threads the bilayer. The 105-residue stretch at 47 to 151 (NNWIDLPISR…KGPIPKWKWV (105 aa)) folds into the FAD-binding FR-type domain. 154–189 (SFESITLIGGGTGITPLYQLIHAITKNPNDKTKIRL) contributes to the FAD binding site.

Belongs to the flavoprotein pyridine nucleotide cytochrome reductase family. The cofactor is FAD.

The protein resides in the mitochondrion outer membrane. The catalysed reaction is 2 Fe(III)-[cytochrome b5] + NADH = 2 Fe(II)-[cytochrome b5] + NAD(+) + H(+). Functionally, may mediate the reduction of outer membrane cytochrome b5. This chain is NADH-cytochrome b5 reductase 2-A (MCR1A), found in Vanderwaltozyma polyspora (strain ATCC 22028 / DSM 70294 / BCRC 21397 / CBS 2163 / NBRC 10782 / NRRL Y-8283 / UCD 57-17) (Kluyveromyces polysporus).